Reading from the N-terminus, the 414-residue chain is Meiotic driver wtf19 (414 aa).

Residues 1-94 are disordered; that stretch reads MKNKYYPVRT…RENHSSGTAD (94 aa). A compositionally biased stretch (basic and acidic residues) spans 11-29; the sequence is SMDEMNAKNDNEIDLEKGP. The span at 57-72 shows a compositional bias: polar residues; it reads GANNPNLFNTDESTTP. The next 9 membrane-spanning stretches (helical) occupy residues 99–119, 136–156, 170–190, 192–212, 222–242, 247–267, 284–304, 311–331, and 339–359; these read FLIKLLISFIPIFVLNVPAVC, WVYFGVWCAICLMIFISLWCF, VTVIFLAQCIKVTVISLAQCV, VTAIFLAQCIKVTVISLAQCV, CVKVTVISLAKCVKVISIGLF, EMMIIIWILWLIICCILFGCV, TISAVLFLIVSSVCIPIWTLW, LQVLGIHGIIAVLVNGLMSLF, and GYEIEGFVLFFTSSALFLYEM.

It belongs to the WTF family. As to quaternary structure, homomer. Forms protein aggregates. The two isoforms can interact with each other and with themselves. High sequence similarity is required for their interaction.

It is found in the spore membrane. Its subcellular location is the vacuole membrane. It localises to the ascus epiplasm. The protein resides in the cytoplasm. The protein localises to the endoplasmic reticulum membrane. Promotes unequal transmission of alleles from the parental zygote to progeny spores by acting as poison/antidote system where the poison and antidote proteins are produced from the same locus; the poison component is trans-acting and targets all spores within an ascus whereas the antidote component is spore-specific, leading to poisoning of all progeny that do not inherit the allele. Its function is as follows. Localizes isoform 2 to the vacuole thereby facilitating its degradation. In terms of biological role, forms toxic aggregates that disrupt spore maturation. The polypeptide is Meiotic driver wtf19 (Schizosaccharomyces kambucha (Fission yeast)).